The sequence spans 314 residues: Carbamate kinase (314 aa).

This sequence belongs to the carbamate kinase family.

The protein localises to the cytoplasm. It catalyses the reaction hydrogencarbonate + NH4(+) + ATP = carbamoyl phosphate + ADP + H2O + H(+). The protein operates within metabolic intermediate metabolism; carbamoyl phosphate degradation; CO(2) and NH(3) from carbamoyl phosphate: step 1/1. The polypeptide is Carbamate kinase (arcC) (Latilactobacillus sakei (Lactobacillus sakei)).